Consider the following 52-residue polypeptide: Alpha-crystallin B chain (52 aa).

Belongs to the small heat shock protein (HSP20) family. Homodimer. Aggregates with homologous proteins, including alpha-A-crystallin and the small heat shock protein HSPB1, to form large heteromeric complexes.

In terms of biological role, may contribute to the transparency and refractive index of the lens. This chain is Alpha-crystallin B chain (CRYAB), found in Eudromia elegans (Elegant crested-tinamou).